The chain runs to 494 residues: Ammonium transporter Rh type C (494 aa).

Residues 1–22 are Cytoplasmic-facing; sequence MGNFIQGCKDYFSQQKNTNIRL. The helical transmembrane segment at 23 to 43 threads the bilayer; that stretch reads TLPVVCFVWQIAMIILFGVFI. At 44–74 the chain is on the extracellular side; it reads RYDEESDTHWVETKAHDNITSDIENDFYFRY. An N-linked (GlcNAc...) asparagine glycan is attached at Asn61. The chain crosses the membrane as a helical span at residues 75-95; the sequence is PSFQDVHVMIFVGFGFLMTFL. Residues 96 to 99 are Cytoplasmic-facing; that stretch reads KRYS. The chain crosses the membrane as a helical span at residues 100-120; that stretch reads FGAVGFNFLIASFGLQWALLM. Residues 121 to 133 are Extracellular-facing; the sequence is QGWFHSLDPQTGK. A helical membrane pass occupies residues 134–154; it reads IFIGVESLINADFCVAGCLIA. At 155-166 the chain is on the cytoplasmic side; sequence YGAVLGKVSPVQ. Residues 167–187 form a helical membrane-spanning segment; sequence LLVMTLFGVTLFAVEEYIILN. At 188–194 the chain is on the extracellular side; that stretch reads LLHARDA. A helical transmembrane segment spans residues 195–215; sequence GGSMVIHTFGGYYGLTISWVL. Topologically, residues 216–234 are cytoplasmic; it reads YRPNLHQSKRMQGSVYHSD. Residues 235-255 form a helical membrane-spanning segment; that stretch reads IFAMIGTLFLWMFWPSFNSAI. The Extracellular segment spans residues 256 to 265; the sequence is TDHGDGQHRA. A helical transmembrane segment spans residues 266–286; sequence VINTYLCLASTVLTTVAISSF. Topologically, residues 287–297 are cytoplasmic; that stretch reads SQKTGKLDMVH. The helical transmembrane segment at 298 to 318 threads the bilayer; the sequence is IQNSTLAGGVALGTAAEFMIS. Position 319 (Pro319) is a topological domain, extracellular. The helical transmembrane segment at 320 to 340 threads the bilayer; that stretch reads YGALIVGFLCGIISTMGYIFI. Over 341–358 the chain is Cytoplasmic; the sequence is SPFLEKTLKIQDTCGIHN. Residues 359-379 form a helical membrane-spanning segment; sequence LHAMPGVIGGIVGAITAAAAS. The Extracellular portion of the chain corresponds to 380–411; it reads ESVYGKHALINTFDFTGDFKDRTVLTQGGYQA. A helical membrane pass occupies residues 412 to 432; the sequence is AGMCVSIVFGVAGGAIVGSIL. Over 433–494 the chain is Cytoplasmic; it reads KLPIWGDPAD…SNFSVEHCES (62 aa).

Belongs to the ammonium transporter (TC 2.A.49) family. Rh subfamily. Homotrimer.

The protein localises to the apical cell membrane. Functions as an ammonia transporter. May play a role in the elimination of ammonia in the gill. This Oncorhynchus mykiss (Rainbow trout) protein is Ammonium transporter Rh type C (rhcg).